A 263-amino-acid chain; its full sequence is MNKMLIADVQSVADTRRIAIDKAGIRAIRHPVRIMDKAGVQHTVAVFNMYVNLAHHLKGVHMSRFVEMLNEHDSVISVETFEKLLISMVKKLEAESGDIEMRFPYFIGKTAPVSGIKSLMDYDVTFIGQTRNGESRFTLKVVVPVTSLCPCSKEVSDDGAHNQRSHISISIRANHFVWIEDLIRIAEDQASCELYGLLKRSDEKYVTEKAYGNPKFVEDAVRDIASVLDRDERIDAYTVEAENFESIHNHSAYALIECDKLKN.

Belongs to the GTP cyclohydrolase IV family.

The enzyme catalyses GTP + H2O = 7,8-dihydroneopterin 3'-triphosphate + formate + H(+). It functions in the pathway cofactor biosynthesis; 7,8-dihydroneopterin triphosphate biosynthesis; 7,8-dihydroneopterin triphosphate from GTP: step 1/1. Converts GTP to 7,8-dihydroneopterin triphosphate. The sequence is that of GTP cyclohydrolase FolE2 from Nitrosospira multiformis (strain ATCC 25196 / NCIMB 11849 / C 71).